A 125-amino-acid polypeptide reads, in one-letter code: Multifunctional methyltransferase subunit TRM112-like protein (125 aa).

The TRM112 domain occupies Arg2–Ser119. Ser119 is subject to Phosphoserine.

Belongs to the TRM112 family. Part of the heterodimeric BUD23-TRM112 methyltransferase complex; this heterodimerization is necessary for the metabolic stability and activity of the catalytic subunit BUD23. Part of the heterodimeric N6AMT1-TRM112 methyltransferase complex; this heterodimerization is necessary for S-adenosyl-L-methionine-binding to N6AMT1/HEMK2. Part of the heterodimeric ALKBH8-TRM112 methyltransferase complex. Part of the heterodimeric METTL5-TRM112 methyltransferase complex; this heterodimerization is necessary for the stability of the catalytic subunit METTL5. Part of the heterodimeric THUMPD3-TRM112 methyltransferase complex; this complex forms an active tRNA methyltransferase, where TRMT112 acts as an activator of the catalytic subunit THUMPD3. Part of the heterodimeric THUMPD2-TRM112 methyltransferase complex; this complex forms an active tRNA methyltransferase, where TRMT112 acts as an activator of the catalytic subunit THUMPD2. Part of the heterodimeric TRMT11-TRM112 methyltransferase complex; this complex forms an active tRNA methyltransferase, where TRMT112 acts as an activator of the catalytic subunit TRMT11.

It localises to the nucleus. Its subcellular location is the nucleoplasm. The protein resides in the cytoplasm. The protein localises to the perinuclear region. Acts as an activator of both rRNA/tRNA and protein methyltransferases. Together with methyltransferase BUD23, methylates the N(7) position of a guanine in 18S rRNA. The heterodimer with HEMK2/N6AMT1 catalyzes N5-methylation of ETF1 on 'Gln-185', using S-adenosyl L-methionine as methyl donor. The heterodimer with ALKBH8 catalyzes the methylation of 5-carboxymethyl uridine to 5-methylcarboxymethyl uridine at the wobble position of the anticodon loop in target tRNA species. Together with methyltransferase THUMPD3, catalyzes the formation of N(2)-methylguanosine at position 6 in a broad range of tRNA substrates and at position 7 of tRNA(Trp). Involved in the pre-rRNA processing steps leading to small-subunit rRNA production. Together with methyltransferase METTL5, specifically methylates the 6th position of adenine in position 1832 of 18S rRNA. This is Multifunctional methyltransferase subunit TRM112-like protein (TRMT112) from Bos taurus (Bovine).